A 358-amino-acid polypeptide reads, in one-letter code: Peptide chain release factor 1 (358 aa).

Glutamine 233 is subject to N5-methylglutamine.

It belongs to the prokaryotic/mitochondrial release factor family. Methylated by PrmC. Methylation increases the termination efficiency of RF1.

It localises to the cytoplasm. In terms of biological role, peptide chain release factor 1 directs the termination of translation in response to the peptide chain termination codons UAG and UAA. The polypeptide is Peptide chain release factor 1 (Staphylococcus saprophyticus subsp. saprophyticus (strain ATCC 15305 / DSM 20229 / NCIMB 8711 / NCTC 7292 / S-41)).